Here is a 428-residue protein sequence, read N- to C-terminus: Homoserine dehydrogenase (428 aa).

NADPH contacts are provided by phenylalanine 10, threonine 12, valine 13, arginine 44, and lysine 106. Valine 13 is an NAD(+) binding site. NADP(+) contacts are provided by valine 13, arginine 44, and lysine 106. Na(+) contacts are provided by glutamate 130, valine 133, glycine 135, and isoleucine 137. The NADP(+) site is built by glycine 188 and glutamate 191. Glutamate 191 and aspartate 202 together coordinate L-homoserine. The Proton donor role is filled by lysine 206. Glycine 303 is an NADPH binding site. Glycine 303 provides a ligand contact to NAD(+). Glycine 303 is an NADP(+) binding site. The ACT domain occupies 351–425 (YFSVETPDST…DFKLLNYFKV (75 aa)).

The protein belongs to the homoserine dehydrogenase family. It depends on a metal cation as a cofactor.

The catalysed reaction is L-homoserine + NADP(+) = L-aspartate 4-semialdehyde + NADPH + H(+). It carries out the reaction L-homoserine + NAD(+) = L-aspartate 4-semialdehyde + NADH + H(+). The protein operates within amino-acid biosynthesis; L-methionine biosynthesis via de novo pathway; L-homoserine from L-aspartate: step 3/3. It participates in amino-acid biosynthesis; L-threonine biosynthesis; L-threonine from L-aspartate: step 3/5. Functionally, catalyzes the conversion of L-aspartate-beta-semialdehyde (L-Asa) to L-homoserine (L-Hse), the third step in the biosynthesis of threonine and methionine from aspartate. The polypeptide is Homoserine dehydrogenase (hom) (Lactococcus lactis subsp. lactis (strain IL1403) (Streptococcus lactis)).